Here is a 574-residue protein sequence, read N- to C-terminus: Phenylalanine--tRNA ligase beta subunit (574 aa).

One can recognise a B5 domain in the interval 278-353 (LTPKEFEVEL…IAYGYNEIEP (76 aa)). Residues Asp331, Asp337, Glu340, and Asp341 each contribute to the Mg(2+) site.

It belongs to the phenylalanyl-tRNA synthetase beta subunit family. Type 2 subfamily. As to quaternary structure, tetramer of two alpha and two beta subunits. Requires Mg(2+) as cofactor.

The protein resides in the cytoplasm. It catalyses the reaction tRNA(Phe) + L-phenylalanine + ATP = L-phenylalanyl-tRNA(Phe) + AMP + diphosphate + H(+). This chain is Phenylalanine--tRNA ligase beta subunit, found in Thermococcus kodakarensis (strain ATCC BAA-918 / JCM 12380 / KOD1) (Pyrococcus kodakaraensis (strain KOD1)).